The following is a 551-amino-acid chain: Glucans biosynthesis protein D (551 aa).

The segment at residues 1–32 is a signal peptide (tat-type signal); it reads MDRRRFIKGSMAMAAVCGTSGIASLFSQAAFA.

This sequence belongs to the OpgD/OpgG family. Post-translationally, predicted to be exported by the Tat system. The position of the signal peptide cleavage has not been experimentally proven.

It is found in the periplasm. It participates in glycan metabolism; osmoregulated periplasmic glucan (OPG) biosynthesis. Probably involved in the control of the structural glucose backbone of osmoregulated periplasmic glucans (OPGs). The chain is Glucans biosynthesis protein D from Shigella dysenteriae serotype 1 (strain Sd197).